Consider the following 302-residue polypeptide: MLRLRCKARSGTQPLPGLTAHSRLRDMQAALAALTGVPAPAQRLLLGFPPRSLDLSDGERRLGELGIHSGDTLIVEEDTSKPSAGSPVVAKRTMAVREAVPVLARRVVPADNSCLFTSVYYVVEGGVYDPGCAPEMRSLIAQIVASDPEAYCEAVLGKTNREYCEWIRREETWGGAIEVSILSKFYQCEICVVDTQTVRIDRFGEDAGYTKRVLLIYDGIHYDPLERKIPDSDVPPQTIFSTTDDVVLAQALELADEARRKRQFTDVNRFTLRCMVCQKGLTGQVEAREHAKETGHTNFGEV.

The interval 5 to 83 is UBX-like; sequence RCKARSGTQP…IVEEDTSKPS (79 aa). The OTU domain occupies 103–228; sequence LARRVVPADN…GIHYDPLERK (126 aa). The cys-loop stretch occupies residues 108 to 114; it reads VPADNSC. Aspartate 111 is a catalytic residue. Cysteine 114 (nucleophile) is an active-site residue. A variable-loop region spans residues 167–177; that stretch reads IRREETWGGAI. The interval 217 to 221 is his-loop; it reads YDGIH. Isoleucine 220 provides a ligand contact to substrate. The active site involves histidine 221. Positions 245 to 250 are S2 site; that stretch reads DVVLAQ. A C2H2-type zinc finger spans residues 272–296; the sequence is LRCMVCQKGLTGQVEAREHAKETGH. Histidine 296 is an active-site residue.

It is found in the cytoplasm. The catalysed reaction is Thiol-dependent hydrolysis of ester, thioester, amide, peptide and isopeptide bonds formed by the C-terminal Gly of ubiquitin (a 76-residue protein attached to proteins as an intracellular targeting signal).. Its function is as follows. Hydrolase that can remove conjugated ubiquitin from proteins and participates in endoplasmic reticulum-associated degradation (ERAD) for misfolded lumenal proteins. May act by triming the ubiquitin chain on the associated substrate to facilitate their threading through the VCP/p97 pore. Ubiquitin moieties on substrates may present a steric impediment to the threading process when the substrate is transferred to the VCP pore and threaded through VCP's axial channel. Mediates deubiquitination of 'Lys-27'-, 'Lys-29'- and 'Lys-33'-linked polyubiquitin chains. Also able to hydrolyze 'Lys-11'-linked ubiquitin chains. Cleaves both polyubiquitin and di-ubiquitin. This is Ubiquitin thioesterase OTU1 (YOD1) from Gallus gallus (Chicken).